The primary structure comprises 314 residues: Ornithine carbamoyltransferase (314 aa).

Carbamoyl phosphate contacts are provided by residues 58 to 61, Gln85, Arg109, and 136 to 139; these read STRT and HPAQ. L-ornithine contacts are provided by residues Asn169, Asp233, and 237–238; that span reads SM. Carbamoyl phosphate is bound by residues 273 to 274 and Arg301; that span reads CL.

It belongs to the aspartate/ornithine carbamoyltransferase superfamily. OTCase family.

Its subcellular location is the cytoplasm. It catalyses the reaction carbamoyl phosphate + L-ornithine = L-citrulline + phosphate + H(+). It functions in the pathway amino-acid degradation; L-arginine degradation via ADI pathway; carbamoyl phosphate from L-arginine: step 2/2. In terms of biological role, reversibly catalyzes the transfer of the carbamoyl group from carbamoyl phosphate (CP) to the N(epsilon) atom of ornithine (ORN) to produce L-citrulline. The chain is Ornithine carbamoyltransferase from Staphylothermus marinus (strain ATCC 43588 / DSM 3639 / JCM 9404 / F1).